Consider the following 306-residue polypeptide: Solute carrier family 25 member 48 (306 aa).

3 Solcar repeats span residues 3–86 (SFQL…TQRF), 101–200 (RSLS…LSEW), and 209–296 (PSPY…SLKA). Transmembrane regions (helical) follow at residues 9-29 (FVAGWIGGVASVIVGYPLDTV), 61-81 (GMSFPLASIAIYNSVVFGVFS), 107-127 (LLASMLTGVVSVGLGGPVELI), 184-204 (IPGYCFYFIPYVFLSEWITPE), 212-232 (YAAWLAGGIAGAISWGTATPM), and 272-290 (ITVNAVRGFPMSAAMFLGY).

The protein belongs to the mitochondrial carrier (TC 2.A.29) family.

It is found in the mitochondrion inner membrane. In Mus musculus (Mouse), this protein is Solute carrier family 25 member 48 (Slc25a48).